The sequence spans 354 residues: ATP-dependent (S)-NAD(P)H-hydrate dehydratase (354 aa).

A YjeF C-terminal domain is found at 42 to 350 (AENILRAITP…ECLGRSLEDI (309 aa)). Residues Gly-155 and 208 to 214 (NVNEYKR) each bind (6S)-NADPHX. Residues 248–252 (KGKSD) and 267–276 (GSPRRCGGQG) each bind ATP. Asp-277 serves as a coordination point for (6S)-NADPHX.

It belongs to the NnrD/CARKD family. Mg(2+) is required as a cofactor.

The catalysed reaction is (6S)-NADHX + ATP = ADP + phosphate + NADH + H(+). It carries out the reaction (6S)-NADPHX + ATP = ADP + phosphate + NADPH + H(+). In terms of biological role, catalyzes the dehydration of the S-form of NAD(P)HX at the expense of ATP, which is converted to ADP. Together with NAD(P)HX epimerase, which catalyzes the epimerization of the S- and R-forms, the enzyme allows the repair of both epimers of NAD(P)HX, a damaged form of NAD(P)H that is a result of enzymatic or heat-dependent hydration. The sequence is that of ATP-dependent (S)-NAD(P)H-hydrate dehydratase from Vitis vinifera (Grape).